The following is a 541-amino-acid chain: Eukaryotic translation initiation factor 3 subunit L (541 aa).

The PCI domain maps to 308 to 516 (TFSDILLYIQ…IHIADTKVSH (209 aa)).

This sequence belongs to the eIF-3 subunit L family. Component of the eukaryotic translation initiation factor 3 (eIF-3) complex. The eIF-3 complex interacts with pix.

The protein resides in the cytoplasm. Component of the eukaryotic translation initiation factor 3 (eIF-3) complex, which is involved in protein synthesis of a specialized repertoire of mRNAs and, together with other initiation factors, stimulates binding of mRNA and methionyl-tRNAi to the 40S ribosome. The eIF-3 complex specifically targets and initiates translation of a subset of mRNAs involved in cell proliferation. This chain is Eukaryotic translation initiation factor 3 subunit L, found in Drosophila pseudoobscura pseudoobscura (Fruit fly).